Reading from the N-terminus, the 189-residue chain is Ribonuclease M5 2 (189 aa).

The Toprim domain occupies 8 to 91 (SQVIVAEGRD…VFLKRDEAVP (84 aa)). Positions 14, 60, and 62 each coordinate Mg(2+).

Belongs to the ribonuclease M5 family. Requires Mg(2+) as cofactor.

The protein resides in the cytoplasm. The enzyme catalyses Endonucleolytic cleavage of RNA, removing 21 and 42 nucleotides, respectively, from the 5'- and 3'-termini of a 5S-rRNA precursor.. In terms of biological role, required for correct processing of both the 5' and 3' ends of 5S rRNA precursor. Cleaves both sides of a double-stranded region yielding mature 5S rRNA in one step. The polypeptide is Ribonuclease M5 2 (Ligilactobacillus salivarius (strain UCC118) (Lactobacillus salivarius)).